Reading from the N-terminus, the 593-residue chain is Probable serine/threonine-protein kinase samkB (593 aa).

An SAM domain is found at 29 to 93 (WNNEAVCEWL…SIFKKLKNNN (65 aa)). Positions 108–157 (ESNSINNSNNNNNNNNNNNNNNNNNNNNNNNNNNNNNNNNNNNNNNKIDT) are disordered. Positions 113-153 (NNSNNNNNNNNNNNNNNNNNNNNNNNNNNNNNNNNNNNNNN) are enriched in low complexity. The Protein kinase domain occupies 186–438 (YKLIEEIGRG…SKQLLEAQWF (253 aa)). ATP-binding positions include 192-200 (IGRGAFSIV) and K216. D313 acts as the Proton acceptor in catalysis.

It belongs to the protein kinase superfamily. Ser/Thr protein kinase family.

It carries out the reaction L-seryl-[protein] + ATP = O-phospho-L-seryl-[protein] + ADP + H(+). The enzyme catalyses L-threonyl-[protein] + ATP = O-phospho-L-threonyl-[protein] + ADP + H(+). The sequence is that of Probable serine/threonine-protein kinase samkB (samkB) from Dictyostelium discoideum (Social amoeba).